Consider the following 408-residue polypeptide: Transmembrane protein 237 (408 aa).

Positions 1–14 are enriched in basic and acidic residues; that stretch reads MRTDSGARLEEGHL. The interval 1–137 is disordered; it reads MRTDSGARLE…RRKTKKTQPA (137 aa). A phosphoserine mark is found at Ser25 and Ser49. Basic and acidic residues predominate over residues 60–77; sequence RPSEGNEPSTKELKEHPE. Positions 95–106 are enriched in low complexity; that stretch reads TSSTQKKSSSSS. The next 4 helical transmembrane spans lie at 227–247, 268–288, 303–323, and 358–378; these read MIGL…IVVI, LAYP…ISAF, FLAL…LILS, and WIVV…FLSY.

Belongs to the TMEM237 family. In terms of assembly, part of the tectonic-like complex (also named B9 complex). Interacts with TMEM107.

It is found in the membrane. Its subcellular location is the cell projection. The protein resides in the cilium. Component of the transition zone in primary cilia. Required for ciliogenesis. This Homo sapiens (Human) protein is Transmembrane protein 237 (TMEM237).